The chain runs to 198 residues: MATDDVNEPLPAAAELPATEAEKQPHKLERKWSFWFDNQSKKGAAWGASLRKAYTFDTVEDFWGLHETIFQTSKLTANAEIHLFKAGVEPKWEDPECANGGKWTWVVTANRKEALDKGWLETLMALIGEQFDEADEICGVVASVRPQSKQDKLSLWTRTKSNEAVLMGIGKKWKEILDVTDKITFNNHDDSRRSRFTV.

The disordered stretch occupies residues 1 to 25 (MATDDVNEPLPAAAELPATEAEKQP). Ala-2 carries the post-translational modification N-acetylalanine. A compositionally biased stretch (low complexity) spans 8–19 (EPLPAAAELPAT). MRNA is bound by residues 46 to 47 (WG) and 92 to 93 (WE). Cys-97 and Cys-138 form a disulfide bridge. 145–152 (RPQSKQDK) lines the mRNA pocket.

The protein belongs to the eukaryotic initiation factor 4E family. As to quaternary structure, EIF4F is a multi-subunit complex, the composition of which varies with external and internal environmental conditions. It is composed of at least EIF4A, EIF4E and EIF4G. EIF4E is also known to interact with other partners. In higher plants two isoforms of EIF4F have been identified, named isoform EIF4F and isoform EIF(iso)4F. Isoform EIF4F has subunits p220 and p26, whereas isoform EIF(iso)4F has subunits p82 and p28. This isoform interacts with the viral protein genome linked (VPg)-proteinase of turnip mosaic potyvirus. Interacts directly with LOX2. Interacts with BTF3. Post-translationally, according to the redox status, the Cys-97-Cys-138 disulfide bridge may have a role in regulating protein function by affecting its ability to bind capped mRNA. As to expression, abundant in floral organs and in young developing tissues.

Recognizes and binds the 7-methylguanosine-containing mRNA cap during an early step in the initiation of protein synthesis and facilitates ribosome binding by inducing the unwinding of the mRNAs secondary structures. Mediates susceptibility to Turnipmosaic potyvirus (TuMV) and Tobacco etch potyvirus (TEV). The polypeptide is Eukaryotic translation initiation factor isoform 4E (EIF(ISO)4E) (Arabidopsis thaliana (Mouse-ear cress)).